We begin with the raw amino-acid sequence, 395 residues long: Putative transcription factor 079L (395 aa).

This sequence belongs to the IIV-6 282R family.

Transcription activation. In Aedes vexans (Inland floodwater mosquito), this protein is Putative transcription factor 079L.